A 208-amino-acid polypeptide reads, in one-letter code: Large ribosomal subunit protein bL25 (208 aa).

The protein belongs to the bacterial ribosomal protein bL25 family. CTC subfamily. As to quaternary structure, part of the 50S ribosomal subunit; part of the 5S rRNA/L5/L18/L25 subcomplex. Contacts the 5S rRNA. Binds to the 5S rRNA independently of L5 and L18.

Its function is as follows. This is one of the proteins that binds to the 5S RNA in the ribosome where it forms part of the central protuberance. The chain is Large ribosomal subunit protein bL25 from Syntrophotalea carbinolica (strain DSM 2380 / NBRC 103641 / GraBd1) (Pelobacter carbinolicus).